Consider the following 386-residue polypeptide: Lipid-A-disaccharide synthase (386 aa).

It belongs to the LpxB family.

It carries out the reaction a lipid X + a UDP-2-N,3-O-bis[(3R)-3-hydroxyacyl]-alpha-D-glucosamine = a lipid A disaccharide + UDP + H(+). It participates in bacterial outer membrane biogenesis; LPS lipid A biosynthesis. Functionally, condensation of UDP-2,3-diacylglucosamine and 2,3-diacylglucosamine-1-phosphate to form lipid A disaccharide, a precursor of lipid A, a phosphorylated glycolipid that anchors the lipopolysaccharide to the outer membrane of the cell. This Chromobacterium violaceum (strain ATCC 12472 / DSM 30191 / JCM 1249 / CCUG 213 / NBRC 12614 / NCIMB 9131 / NCTC 9757 / MK) protein is Lipid-A-disaccharide synthase.